Consider the following 239-residue polypeptide: Orotidine 5'-phosphate decarboxylase (239 aa).

Substrate-binding positions include aspartate 10, lysine 33, 60-69 (DLKLYDIPNT), threonine 124, arginine 186, glutamine 195, glycine 215, and arginine 216. Lysine 62 serves as the catalytic Proton donor.

This sequence belongs to the OMP decarboxylase family. Type 1 subfamily. In terms of assembly, homodimer.

The enzyme catalyses orotidine 5'-phosphate + H(+) = UMP + CO2. It participates in pyrimidine metabolism; UMP biosynthesis via de novo pathway; UMP from orotate: step 2/2. Catalyzes the decarboxylation of orotidine 5'-monophosphate (OMP) to uridine 5'-monophosphate (UMP). In Latilactobacillus sakei subsp. sakei (strain 23K) (Lactobacillus sakei subsp. sakei), this protein is Orotidine 5'-phosphate decarboxylase.